Here is a 92-residue protein sequence, read N- to C-terminus: Bombyxin A-5 (92 aa).

The first 19 residues, 1-19 (MKLLLAIALMLTTVMWAST), serve as a signal peptide directing secretion. At Gln20 the chain carries Pyrrolidone carboxylic acid. 3 disulfides stabilise this stretch: Cys29/Cys79, Cys41/Cys92, and Cys78/Cys83. Residues 50-71 (SDAQFASYGSAWLMPYSEGRDQ) constitute a propeptide, c peptide like.

This sequence belongs to the insulin family. As to quaternary structure, heterodimer of a B chain and an A chain linked by two disulfide bonds.

The protein resides in the secreted. In terms of biological role, brain peptide responsible for activation of prothoracic glands to produce ecdysone in insects. The polypeptide is Bombyxin A-5 (BBXA5) (Bombyx mori (Silk moth)).